The chain runs to 195 residues: HTH-type transcriptional regulator BetI (195 aa).

In terms of domain architecture, HTH tetR-type spans 8–68 (SIRRRQLIDA…ATMRDITSQL (61 aa)). Residues 31-50 (TIAQIARRAGVSTGIISHYF) constitute a DNA-binding region (H-T-H motif).

Its pathway is amine and polyamine biosynthesis; betaine biosynthesis via choline pathway [regulation]. In terms of biological role, repressor involved in the biosynthesis of the osmoprotectant glycine betaine. It represses transcription of the choline transporter BetT and the genes of BetAB involved in the synthesis of glycine betaine. The protein is HTH-type transcriptional regulator BetI of Escherichia coli (strain K12 / DH10B).